Reading from the N-terminus, the 155-residue chain is MALYEHIFIARQDVSQQQVEALTEQFSNIIKEQGGQVGKTEYWGLRNLAFKVKKNRKGHYTLVNIDAPHAAVAEMERQMGISEDVLRFITVRVEEHETEPSAMMQSRGDRGDRGDRRGGDRFGDRDRGDRGDRGSSRFGDRERPRRDDNSDGGQE.

Residues 94 to 155 (EEHETEPSAM…RDDNSDGGQE (62 aa)) are disordered. Residues 107–149 (RGDRGDRGDRRGGDRFGDRDRGDRGDRGSSRFGDRERPRRDDN) show a composition bias toward basic and acidic residues.

It belongs to the bacterial ribosomal protein bS6 family.

In terms of biological role, binds together with bS18 to 16S ribosomal RNA. This chain is Small ribosomal subunit protein bS6, found in Parvibaculum lavamentivorans (strain DS-1 / DSM 13023 / NCIMB 13966).